The chain runs to 282 residues: 4-diphosphocytidyl-2-C-methyl-D-erythritol kinase (282 aa).

Lys-9 is an active-site residue. 98–108 (PMGGGLGGGSS) is a binding site for ATP. The active site involves Asp-140.

This sequence belongs to the GHMP kinase family. IspE subfamily. As to quaternary structure, homodimer.

The enzyme catalyses 4-CDP-2-C-methyl-D-erythritol + ATP = 4-CDP-2-C-methyl-D-erythritol 2-phosphate + ADP + H(+). Its pathway is isoprenoid biosynthesis; isopentenyl diphosphate biosynthesis via DXP pathway; isopentenyl diphosphate from 1-deoxy-D-xylulose 5-phosphate: step 3/6. Its function is as follows. Catalyzes the phosphorylation of the position 2 hydroxy group of 4-diphosphocytidyl-2C-methyl-D-erythritol. This is 4-diphosphocytidyl-2-C-methyl-D-erythritol kinase from Salmonella agona (strain SL483).